Consider the following 327-residue polypeptide: GMP reductase (327 aa).

The active-site Thioimidate intermediate is Cys-176. Residue 205 to 228 (IIADGGIRTHGDIAKSIRFGATMV) participates in NADP(+) binding.

The protein belongs to the IMPDH/GMPR family. GuaC type 2 subfamily.

It carries out the reaction IMP + NH4(+) + NADP(+) = GMP + NADPH + 2 H(+). Catalyzes the irreversible NADPH-dependent deamination of GMP to IMP. It functions in the conversion of nucleobase, nucleoside and nucleotide derivatives of G to A nucleotides, and in maintaining the intracellular balance of A and G nucleotides. This is GMP reductase from Streptococcus equi subsp. zooepidemicus (strain H70).